Here is a 419-residue protein sequence, read N- to C-terminus: Adenylosuccinate synthetase (419 aa).

GTP contacts are provided by residues 15–21 (GDEGKGK) and 43–45 (GHT). The Proton acceptor role is filled by Asp16. Mg(2+) is bound by residues Asp16 and Gly43. Residues 16–19 (DEGK), 41–44 (NAGH), Thr128, Arg142, Gln223, Thr238, and Arg302 each bind IMP. Catalysis depends on His44, which acts as the Proton donor. Residue 298–304 (TTTGRAR) coordinates substrate. GTP contacts are provided by residues Arg304, 330–332 (KLD), and 408–410 (STS).

Belongs to the adenylosuccinate synthetase family. As to quaternary structure, homodimer. The cofactor is Mg(2+).

It localises to the cytoplasm. The catalysed reaction is IMP + L-aspartate + GTP = N(6)-(1,2-dicarboxyethyl)-AMP + GDP + phosphate + 2 H(+). It participates in purine metabolism; AMP biosynthesis via de novo pathway; AMP from IMP: step 1/2. Its function is as follows. Plays an important role in the de novo pathway of purine nucleotide biosynthesis. Catalyzes the first committed step in the biosynthesis of AMP from IMP. This Sulfurimonas denitrificans (strain ATCC 33889 / DSM 1251) (Thiomicrospira denitrificans (strain ATCC 33889 / DSM 1251)) protein is Adenylosuccinate synthetase.